Consider the following 391-residue polypeptide: Carbamoyl phosphate synthase small chain (391 aa).

A CPSase region spans residues 1-189 (MIKSALLVLE…DLPAAKQPED (189 aa)). L-glutamine-binding residues include serine 47, glycine 241, and glycine 243. In terms of domain architecture, Glutamine amidotransferase type-1 spans 193 to 380 (HVVAYDYGVK…IELIEAYRAS (188 aa)). Cysteine 269 functions as the Nucleophile in the catalytic mechanism. The L-glutamine site is built by leucine 270, glutamine 273, asparagine 311, glycine 313, and phenylalanine 314. Catalysis depends on residues histidine 353 and glutamate 355.

The protein belongs to the CarA family. As to quaternary structure, composed of two chains; the small (or glutamine) chain promotes the hydrolysis of glutamine to ammonia, which is used by the large (or ammonia) chain to synthesize carbamoyl phosphate. Tetramer of heterodimers (alpha,beta)4.

It catalyses the reaction hydrogencarbonate + L-glutamine + 2 ATP + H2O = carbamoyl phosphate + L-glutamate + 2 ADP + phosphate + 2 H(+). It carries out the reaction L-glutamine + H2O = L-glutamate + NH4(+). Its pathway is amino-acid biosynthesis; L-arginine biosynthesis; carbamoyl phosphate from bicarbonate: step 1/1. It functions in the pathway pyrimidine metabolism; UMP biosynthesis via de novo pathway; (S)-dihydroorotate from bicarbonate: step 1/3. Small subunit of the glutamine-dependent carbamoyl phosphate synthetase (CPSase). CPSase catalyzes the formation of carbamoyl phosphate from the ammonia moiety of glutamine, carbonate, and phosphate donated by ATP, constituting the first step of 2 biosynthetic pathways, one leading to arginine and/or urea and the other to pyrimidine nucleotides. The small subunit (glutamine amidotransferase) binds and cleaves glutamine to supply the large subunit with the substrate ammonia. The chain is Carbamoyl phosphate synthase small chain from Yersinia pestis.